The following is a 500-amino-acid chain: Serine/threonine protein phosphatase 2A 57 kDa regulatory subunit B' kappa isoform (500 aa).

The tract at residues 1-53 is disordered; it reads MFKQFLSKLPRKSSKSDSGELNRSSSGPVSSPVQRSGTSGGGSGPVRSNSGKR. The span at 21-37 shows a compositional bias: polar residues; it reads LNRSSSGPVSSPVQRSG.

Belongs to the phosphatase 2A regulatory subunit B56 family. In terms of assembly, PP2A consists of a common heteromeric enzyme, composed of a catalytic subunit (subunits C), a constant regulatory subunit (subunit A), and a variety of regulatory subunits such as subunits B (the R2/B/PR55/B55, R3/B''/PR72/PR130/PR59 and R5/B'/B56 families).

It is found in the cytoplasm. Functionally, the B regulatory subunit may modulate substrate selectivity and catalytic activity, and may also direct the localization of the catalytic enzyme to a particular subcellular compartment. The chain is Serine/threonine protein phosphatase 2A 57 kDa regulatory subunit B' kappa isoform (B'KAPPA) from Arabidopsis thaliana (Mouse-ear cress).